A 102-amino-acid chain; its full sequence is Large ribosomal subunit protein bL21 (102 aa).

This sequence belongs to the bacterial ribosomal protein bL21 family. As to quaternary structure, part of the 50S ribosomal subunit. Contacts protein L20.

This protein binds to 23S rRNA in the presence of protein L20. This chain is Large ribosomal subunit protein bL21, found in Bifidobacterium longum subsp. infantis (strain ATCC 15697 / DSM 20088 / JCM 1222 / NCTC 11817 / S12).